Here is a 367-residue protein sequence, read N- to C-terminus: Probable L-aspartate decarboxylase (367 aa).

The residue at position 216 (Lys-216) is an N6-(pyridoxal phosphate)lysine.

This sequence belongs to the group II decarboxylase family. MfnA subfamily. Pyridoxal 5'-phosphate is required as a cofactor.

The enzyme catalyses L-aspartate + H(+) = beta-alanine + CO2. It functions in the pathway cofactor biosynthesis; coenzyme A biosynthesis. In terms of biological role, catalyzes the decarboxylation of L-aspartate to produce beta-alanine. The chain is Probable L-aspartate decarboxylase from Archaeoglobus fulgidus (strain ATCC 49558 / DSM 4304 / JCM 9628 / NBRC 100126 / VC-16).